The sequence spans 675 residues: Methionine--tRNA ligase (675 aa).

Positions 15 to 25 (PYANGSIHLGH) match the 'HIGH' region motif. Residues Cys-146, Cys-149, Cys-159, and Cys-162 each contribute to the Zn(2+) site. The short motif at 332–336 (KMSKS) is the 'KMSKS' region element. Residue Lys-335 coordinates ATP. One can recognise a tRNA-binding domain in the interval 573 to 675 (DFAKIDMRIA…SGAKPGHQVK (103 aa)).

This sequence belongs to the class-I aminoacyl-tRNA synthetase family. MetG type 1 subfamily. As to quaternary structure, homodimer. Zn(2+) serves as cofactor.

The protein resides in the cytoplasm. It catalyses the reaction tRNA(Met) + L-methionine + ATP = L-methionyl-tRNA(Met) + AMP + diphosphate. Is required not only for elongation of protein synthesis but also for the initiation of all mRNA translation through initiator tRNA(fMet) aminoacylation. The polypeptide is Methionine--tRNA ligase (Proteus mirabilis (strain HI4320)).